A 223-amino-acid polypeptide reads, in one-letter code: Ribonuclease 3 (223 aa).

One can recognise an RNase III domain in the interval 4–127; the sequence is YSQLEKRLNY…IIGAVYLEAG (124 aa). Residue glutamate 40 coordinates Mg(2+). Aspartate 44 is a catalytic residue. 2 residues coordinate Mg(2+): asparagine 113 and glutamate 116. Glutamate 116 is an active-site residue. Positions 154-223 constitute a DRBM domain; it reads DYKTALQELT…AKIALEALKK (70 aa).

This sequence belongs to the ribonuclease III family. As to quaternary structure, homodimer. It depends on Mg(2+) as a cofactor.

It is found in the cytoplasm. The enzyme catalyses Endonucleolytic cleavage to 5'-phosphomonoester.. Its function is as follows. Digests double-stranded RNA. Involved in the processing of primary rRNA transcript to yield the immediate precursors to the large and small rRNAs (23S and 16S). Processes some mRNAs, and tRNAs when they are encoded in the rRNA operon. Processes pre-crRNA and tracrRNA of type II CRISPR loci if present in the organism. The polypeptide is Ribonuclease 3 (Sulfurovum sp. (strain NBC37-1)).